A 472-amino-acid polypeptide reads, in one-letter code: Ribosomal protein uS12 methylthiotransferase RimO (472 aa).

One can recognise an MTTase N-terminal domain in the interval 33–143 (NRIGFVSLGC…VLKHVHKYVP (111 aa)). [4Fe-4S] cluster is bound by residues Cys42, Cys78, Cys107, Cys175, Cys179, and Cys182. The 238-residue stretch at 161 to 398 (LTPKHYAYLK…MELQAEISAE (238 aa)) folds into the Radical SAM core domain. One can recognise a TRAM domain in the interval 401–467 (ARFVGRTLDI…EHDLWAEVVD (67 aa)).

The protein belongs to the methylthiotransferase family. RimO subfamily. [4Fe-4S] cluster serves as cofactor.

Its subcellular location is the cytoplasm. The enzyme catalyses L-aspartate(89)-[ribosomal protein uS12]-hydrogen + (sulfur carrier)-SH + AH2 + 2 S-adenosyl-L-methionine = 3-methylsulfanyl-L-aspartate(89)-[ribosomal protein uS12]-hydrogen + (sulfur carrier)-H + 5'-deoxyadenosine + L-methionine + A + S-adenosyl-L-homocysteine + 2 H(+). In terms of biological role, catalyzes the methylthiolation of an aspartic acid residue of ribosomal protein uS12. In Shewanella sp. (strain W3-18-1), this protein is Ribosomal protein uS12 methylthiotransferase RimO.